The chain runs to 212 residues: Proteasome subunit beta (212 aa).

The propeptide at 1-11 (MSQEHQDVKTG) is removed in mature form; by autocatalysis. The active-site Nucleophile is the Thr12.

The protein belongs to the peptidase T1B family. In terms of assembly, the 20S proteasome core is composed of 14 alpha and 14 beta subunits that assemble into four stacked heptameric rings, resulting in a barrel-shaped structure. The two inner rings, each composed of seven catalytic beta subunits, are sandwiched by two outer rings, each composed of seven alpha subunits. The catalytic chamber with the active sites is on the inside of the barrel. Has a gated structure, the ends of the cylinder being occluded by the N-termini of the alpha-subunits. Is capped at one or both ends by the proteasome regulatory ATPase, PAN.

It is found in the cytoplasm. The catalysed reaction is Cleavage of peptide bonds with very broad specificity.. The formation of the proteasomal ATPase PAN-20S proteasome complex, via the docking of the C-termini of PAN into the intersubunit pockets in the alpha-rings, triggers opening of the gate for substrate entry. Interconversion between the open-gate and close-gate conformations leads to a dynamic regulation of the 20S proteasome proteolysis activity. Functionally, component of the proteasome core, a large protease complex with broad specificity involved in protein degradation. In Methanocorpusculum labreanum (strain ATCC 43576 / DSM 4855 / Z), this protein is Proteasome subunit beta.